Here is a 226-residue protein sequence, read N- to C-terminus: Uracil-DNA glycosylase (226 aa).

Asp-64 (proton acceptor) is an active-site residue.

It belongs to the uracil-DNA glycosylase (UDG) superfamily. UNG family.

It localises to the cytoplasm. It carries out the reaction Hydrolyzes single-stranded DNA or mismatched double-stranded DNA and polynucleotides, releasing free uracil.. In terms of biological role, excises uracil residues from the DNA which can arise as a result of misincorporation of dUMP residues by DNA polymerase or due to deamination of cytosine. The protein is Uracil-DNA glycosylase of Vibrio cholerae serotype O1 (strain ATCC 39541 / Classical Ogawa 395 / O395).